Here is a 387-residue protein sequence, read N- to C-terminus: Diphthine methyltransferase (387 aa).

WD repeat units follow at residues 62-102 (NTYG…KDDF), 119-159 (EKDV…VQFT), 195-237 (PHEL…FIWS), 241-286 (IHDA…ESIF), and 357-387 (GHDS…TWIV).

It belongs to the DPH7 family. In terms of assembly, interacts with CAN1 and RTT10.

The protein resides in the cytoplasm. It localises to the endosome. It catalyses the reaction diphthine methyl ester-[translation elongation factor 2] + H2O = diphthine-[translation elongation factor 2] + methanol + H(+). It functions in the pathway protein modification; peptidyl-diphthamide biosynthesis. Functionally, catalyzes the demethylation of diphthine methyl ester to form diphthine, an intermediate in diphthamide biosynthesis, a post-translational modification of histidine which occurs in translation elongation factor 2 (EFT1 and EFT2). Also plays a role in the regulation of the retromer complex and is required for the recycling from endosomes of plasma membrane proteins like CAN1 and MUP1. Identified in a screen for mutants with decreased levels of rDNA transcription. This is Diphthine methyltransferase (RRT2) from Saccharomyces cerevisiae (strain ATCC 204508 / S288c) (Baker's yeast).